The following is a 311-amino-acid chain: CAAX prenyl protease 2 (311 aa).

Transmembrane regions (helical) follow at residues valine 14–isoleucine 34, phenylalanine 51–isoleucine 71, and valine 94–phenylalanine 114. Glutamate 164 serves as the catalytic Proton donor/acceptor. The chain crosses the membrane as a helical span at residues isoleucine 173–leucine 193. Histidine 198 functions as the Proton donor/acceptor in the catalytic mechanism. A run of 3 helical transmembrane segments spans residues isoleucine 219–isoleucine 239, leucine 244–alanine 264, and glycine 268–leucine 288.

It belongs to the peptidase U48 family. Expressed in seeds, stems, leaves, flowers and siliques.

The protein resides in the endoplasmic reticulum membrane. The catalysed reaction is Hydrolyzes the peptide bond -P2-(S-farnesyl or geranylgeranyl)C-P1'-P2'-P3'-COOH where P1' and P2' are amino acids with aliphatic sidechains and P3' is any C-terminal residue.. With respect to regulation, inhibited in vitro by L-1-tosylamido-2-phenylethyl chloromethyl ketone (TPCK) and N-ethylmaleimide, but not by EDTA. Its function is as follows. Protease involved in the processing of a variety of prenylated proteins containing the C-terminal CAAX motif, where C is a cysteine modified with an isoprenoid lipid, A is an aliphatic amino acid and X is any C-terminal amino acid. Proteolytically removes the C-terminal three residues of farnesylated and geranylated proteins, leaving the prenylated cysteine as the new C-terminus. The substrate specificity is only partially overlapping with that of FACE1. CAAX processing is likely required for subcellular targeting of prenylated proteins to the plasma membrane. The polypeptide is CAAX prenyl protease 2 (FACE2) (Arabidopsis thaliana (Mouse-ear cress)).